The sequence spans 37 residues: Large ribosomal subunit protein bL36c (37 aa).

Belongs to the bacterial ribosomal protein bL36 family.

The protein resides in the plastid. It is found in the chloroplast. This Angiopteris evecta (Mule's foot fern) protein is Large ribosomal subunit protein bL36c.